We begin with the raw amino-acid sequence, 295 residues long: ATP synthase gamma chain (295 aa).

Belongs to the ATPase gamma chain family. F-type ATPases have 2 components, CF(1) - the catalytic core - and CF(0) - the membrane proton channel. CF(1) has five subunits: alpha(3), beta(3), gamma(1), delta(1), epsilon(1). CF(0) has three main subunits: a, b and c.

The protein localises to the cell inner membrane. Functionally, produces ATP from ADP in the presence of a proton gradient across the membrane. The gamma chain is believed to be important in regulating ATPase activity and the flow of protons through the CF(0) complex. This is ATP synthase gamma chain from Aliarcobacter butzleri (strain RM4018) (Arcobacter butzleri).